Consider the following 416-residue polypeptide: Glutamyl-tRNA reductase (416 aa).

Substrate-binding positions include 49–52 (TCNR), serine 105, 110–112 (EPQ), and glutamine 116. The active-site Nucleophile is cysteine 50. 185-190 (GAGETI) lines the NADP(+) pocket.

It belongs to the glutamyl-tRNA reductase family. As to quaternary structure, homodimer.

It catalyses the reaction (S)-4-amino-5-oxopentanoate + tRNA(Glu) + NADP(+) = L-glutamyl-tRNA(Glu) + NADPH + H(+). Its pathway is porphyrin-containing compound metabolism; protoporphyrin-IX biosynthesis; 5-aminolevulinate from L-glutamyl-tRNA(Glu): step 1/2. Catalyzes the NADPH-dependent reduction of glutamyl-tRNA(Glu) to glutamate 1-semialdehyde (GSA). The chain is Glutamyl-tRNA reductase from Shewanella baltica (strain OS223).